Reading from the N-terminus, the 334-residue chain is Beta-hexosaminidase (334 aa).

Substrate is bound by residues Asp-60, Arg-68, Arg-133, and Lys-163–His-164. His-176 serves as the catalytic Proton donor/acceptor. Catalysis depends on Asp-247, which acts as the Nucleophile.

The protein belongs to the glycosyl hydrolase 3 family. NagZ subfamily.

It is found in the cytoplasm. It carries out the reaction Hydrolysis of terminal non-reducing N-acetyl-D-hexosamine residues in N-acetyl-beta-D-hexosaminides.. It functions in the pathway cell wall biogenesis; peptidoglycan recycling. In terms of biological role, plays a role in peptidoglycan recycling by cleaving the terminal beta-1,4-linked N-acetylglucosamine (GlcNAc) from peptide-linked peptidoglycan fragments, giving rise to free GlcNAc, anhydro-N-acetylmuramic acid and anhydro-N-acetylmuramic acid-linked peptides. The chain is Beta-hexosaminidase from Xanthomonas euvesicatoria pv. vesicatoria (strain 85-10) (Xanthomonas campestris pv. vesicatoria).